Reading from the N-terminus, the 215-residue chain is Ribulose-phosphate 3-epimerase (215 aa).

Serine 13 is a substrate binding site. A divalent metal cation is bound by residues histidine 38, aspartate 40, histidine 69, and aspartate 175. The active-site Proton acceptor is the aspartate 40. Substrate-binding positions include histidine 69, 175-177 (DGG), and 196-197 (GS). The active-site Proton donor is the aspartate 175.

It belongs to the ribulose-phosphate 3-epimerase family. It depends on a divalent metal cation as a cofactor.

It catalyses the reaction D-ribulose 5-phosphate = D-xylulose 5-phosphate. It functions in the pathway carbohydrate degradation. In terms of biological role, catalyzes the reversible epimerization of D-ribulose 5-phosphate to D-xylulose 5-phosphate. The protein is Ribulose-phosphate 3-epimerase of Mycoplasma pneumoniae (strain ATCC 29342 / M129 / Subtype 1) (Mycoplasmoides pneumoniae).